The chain runs to 73 residues: uncharacterized protein (73 aa).

Positions 1–21 (MTLFSSLSSLSTGSLKSSVSS) are cleaved as a signal peptide. Positions 1 to 38 (MTLFSSLSSLSTGSLKSSVSSIETGSSSGSFGSNETSG) are enriched in low complexity. Residues 1–43 (MTLFSSLSSLSTGSLKSSVSSIETGSSSGSFGSNETSGWGSHH) form a disordered region. Asn34 carries an N-linked (GlcNAc...) asparagine glycan.

It localises to the secreted. This is an uncharacterized protein from Dictyostelium discoideum (Social amoeba).